Here is a 29-residue protein sequence, read N- to C-terminus: 28 kDa protein (29 aa).

This Tritrichomonas foetus (Trichomonas foetus) protein is 28 kDa protein.